The following is a 141-amino-acid chain: Large ribosomal subunit protein uL11 (141 aa).

Belongs to the universal ribosomal protein uL11 family. As to quaternary structure, part of the ribosomal stalk of the 50S ribosomal subunit. Interacts with L10 and the large rRNA to form the base of the stalk. L10 forms an elongated spine to which L12 dimers bind in a sequential fashion forming a multimeric L10(L12)X complex. In terms of processing, one or more lysine residues are methylated.

In terms of biological role, forms part of the ribosomal stalk which helps the ribosome interact with GTP-bound translation factors. In Gloeobacter violaceus (strain ATCC 29082 / PCC 7421), this protein is Large ribosomal subunit protein uL11.